The chain runs to 398 residues: MKKISLLGSTGSIGTQTLDIVNQYPDQFQVVGLATRSNVELLATQVQQFRPEIVAICDESKLGSLKDAIASMDYSPLILAGEQGVAEVARHGDAESVVTGIVGCAGLLPTIAAIEAGKDIALANKETLIAGGPVVLPLIEKHGVKLLPADSEHSAIFQCLQGVPDGGLRRIILTASGGAFRDWPVEQLKYVTVQDALKHPNWSMGQKITVDSATLMNKGLEVIEAHFLFGMDYENIDIVIHPQSIIHSLIEVQDTSVLAQLGWPDMRLPLLYALSWPERIYTDWEQLDLVKAGSLTFREPDHDKYPCMQLAYAAGNAGGAMPAVLNAANEQAVALFLAEKIAFLDIPKVIEKTCDNFRDHNRSQPSLEDILEADKWAREAVLMAAEGLGTENKVVSLK.

NADPH-binding residues include threonine 10, glycine 11, serine 12, isoleucine 13, asparagine 38, and asparagine 124. Lysine 125 contributes to the 1-deoxy-D-xylulose 5-phosphate binding site. An NADPH-binding site is contributed by glutamate 126. Position 150 (aspartate 150) interacts with Mn(2+). 1-deoxy-D-xylulose 5-phosphate contacts are provided by serine 151, glutamate 152, serine 176, and histidine 199. Glutamate 152 contributes to the Mn(2+) binding site. Glycine 205 contributes to the NADPH binding site. The 1-deoxy-D-xylulose 5-phosphate site is built by serine 212, asparagine 217, lysine 218, and glutamate 221. Glutamate 221 provides a ligand contact to Mn(2+).

It belongs to the DXR family. Requires Mg(2+) as cofactor. The cofactor is Mn(2+).

The catalysed reaction is 2-C-methyl-D-erythritol 4-phosphate + NADP(+) = 1-deoxy-D-xylulose 5-phosphate + NADPH + H(+). Its pathway is isoprenoid biosynthesis; isopentenyl diphosphate biosynthesis via DXP pathway; isopentenyl diphosphate from 1-deoxy-D-xylulose 5-phosphate: step 1/6. Catalyzes the NADPH-dependent rearrangement and reduction of 1-deoxy-D-xylulose-5-phosphate (DXP) to 2-C-methyl-D-erythritol 4-phosphate (MEP). The polypeptide is 1-deoxy-D-xylulose 5-phosphate reductoisomerase (Crocosphaera subtropica (strain ATCC 51142 / BH68) (Cyanothece sp. (strain ATCC 51142))).